The primary structure comprises 31 residues: Aspartate racemase (31 aa).

The tract at residues 1–31 (PVAPEYLFKKEEDKGANKEEEEVAPELGIRA) is disordered. The span at 7–18 (LFKKEEDKGANK) shows a compositional bias: basic and acidic residues.

It belongs to the aspartate/glutamate racemases family. Pyridoxal 5'-phosphate serves as cofactor.

The enzyme catalyses L-aspartate = D-aspartate. Inhibited by hydroxylamine, aminooxyacetate, phenylhydrazine and sodium borohydride. Functionally, highly specific toward aspartate and entirely inactive on glutamate, alanine and serine. The polypeptide is Aspartate racemase (Anadara broughtonii (Blood clam)).